A 1096-amino-acid chain; its full sequence is DNA-directed RNA polymerase subunit beta (1096 aa).

Residues 1069-1096 (DLMQDVNPRRSTPSRPTYESLGSDYQED) form a disordered region.

Belongs to the RNA polymerase beta chain family. In cyanobacteria the RNAP catalytic core is composed of 2 alpha, 1 beta, 1 beta', 1 gamma and 1 omega subunit. When a sigma factor is associated with the core the holoenzyme is formed, which can initiate transcription.

It carries out the reaction RNA(n) + a ribonucleoside 5'-triphosphate = RNA(n+1) + diphosphate. DNA-dependent RNA polymerase catalyzes the transcription of DNA into RNA using the four ribonucleoside triphosphates as substrates. This is DNA-directed RNA polymerase subunit beta from Prochlorococcus marinus (strain SARG / CCMP1375 / SS120).